The chain runs to 234 residues: Zinc finger FYVE domain-containing protein 21 (234 aa).

Residues 44–104 (DKECPRCMQC…QCADCALVSH (61 aa)) form an FYVE-type zinc finger. The Zn(2+) site is built by Cys50, Cys53, Cys66, Cys69, Cys74, Cys77, Cys96, and Cys99. The tract at residues 107–234 (AEFYDKQLKV…TKLLYESRDQ (128 aa)) is PH-like.

As to quaternary structure, interacts with PTK2/FAK1.

Its subcellular location is the cell junction. The protein resides in the focal adhesion. It localises to the cytoplasmic vesicle. It is found in the endosome. Its function is as follows. Plays a role in cell adhesion, and thereby in cell motility which requires repeated formation and disassembly of focal adhesions. Regulates microtubule-induced PTK2/FAK1 dephosphorylation, an event important for focal adhesion disassembly, as well as integrin beta-1/ITGB1 cell surface expression. The chain is Zinc finger FYVE domain-containing protein 21 (Zfyve21) from Rattus norvegicus (Rat).